We begin with the raw amino-acid sequence, 177 residues long: Large ribosomal subunit protein uL6 (177 aa).

This sequence belongs to the universal ribosomal protein uL6 family. Part of the 50S ribosomal subunit.

In terms of biological role, this protein binds to the 23S rRNA, and is important in its secondary structure. It is located near the subunit interface in the base of the L7/L12 stalk, and near the tRNA binding site of the peptidyltransferase center. This chain is Large ribosomal subunit protein uL6, found in Haemophilus influenzae (strain 86-028NP).